The chain runs to 95 residues: Protein TusB (95 aa).

It belongs to the DsrH/TusB family. As to quaternary structure, heterohexamer, formed by a dimer of trimers. The hexameric TusBCD complex contains 2 copies each of TusB, TusC and TusD. The TusBCD complex interacts with TusE.

The protein localises to the cytoplasm. Part of a sulfur-relay system required for 2-thiolation of 5-methylaminomethyl-2-thiouridine (mnm(5)s(2)U) at tRNA wobble positions. The protein is Protein TusB of Pectobacterium parmentieri.